Here is a 360-residue protein sequence, read N- to C-terminus: ELAV-like protein 2 (360 aa).

The disordered stretch occupies residues 1–36; it reads METQLSNGPTCNNTANGPTTVNNNCSSPVDSGNTED. RRM domains are found at residues 39–117 and 125–205; these read TNLI…YARP and ANLY…FANN. The residue at position 221 (Ser221) is a Phosphoserine. The 79-residue stretch at 277-355 folds into the RRM 3 domain; the sequence is WCIFVYNLAP…RVLQVSFKTN (79 aa).

This sequence belongs to the RRM elav family. In terms of assembly, interacts with IGF2BP1. Interacts with MAP1B light chain LC1. In terms of tissue distribution, brain; neural-specific. Expressed in the hippocampus.

Its function is as follows. RNA-binding protein that binds to the 3' untranslated region (3'UTR) of target mRNAs. Seems to recognize a GAAA motif. Can bind to its own 3'UTR, the FOS 3'UTR and the ID 3'UTR. The protein is ELAV-like protein 2 (Elavl2) of Mus musculus (Mouse).